Here is a 126-residue protein sequence, read N- to C-terminus: Large ribosomal subunit protein bL20 (126 aa).

Basic residues predominate over residues 1–15 (MARVKRAVNAQKKRR). A disordered region spans residues 1 to 20 (MARVKRAVNAQKKRRTTLER).

It belongs to the bacterial ribosomal protein bL20 family.

Binds directly to 23S ribosomal RNA and is necessary for the in vitro assembly process of the 50S ribosomal subunit. It is not involved in the protein synthesizing functions of that subunit. This Beutenbergia cavernae (strain ATCC BAA-8 / DSM 12333 / CCUG 43141 / JCM 11478 / NBRC 16432 / NCIMB 13614 / HKI 0122) protein is Large ribosomal subunit protein bL20.